The primary structure comprises 198 residues: Probable GTP-binding protein EngB (198 aa).

One can recognise an EngB-type G domain in the interval 21 to 195 (NFSEVAFLGR…EDIIINQTLG (175 aa)). GTP-binding positions include 29-36 (GRSNVGKS), 56-60 (GKTQL), 81-84 (DLPG), 151-154 (TKCD), and 174-176 (VSN). Residues Ser-36 and Thr-58 each contribute to the Mg(2+) site.

The protein belongs to the TRAFAC class TrmE-Era-EngA-EngB-Septin-like GTPase superfamily. EngB GTPase family. Requires Mg(2+) as cofactor.

Its function is as follows. Necessary for normal cell division and for the maintenance of normal septation. In Campylobacter jejuni (strain RM1221), this protein is Probable GTP-binding protein EngB.